An 834-amino-acid polypeptide reads, in one-letter code: MEAMLPLFEPKGRVLLVDGHHLAYRTFFALKGLTTSRGEPVQAVYGFAKSLLKALKEDGYKAVFVVFDAKAPSFRHEAYEAYKAGRAPTPEDFPRQLALIKELVDLLGFTRLEVPGYEADDVLATLAKNPEKEGYEVRILTADRDLDQLVSDRVAVLHPEGHLITPEWLWQKYGLKPEQWVDFRALVGDPSDNLPGVKGIGEKTALKLLKEWGSLENLLKNLDRVKPENVREKIKAHLEDLRLSLELSRVRTDLPLEVDLAQGREPDREGLRAFLERLEFGSLLHEFGLLEAPAPLEEAPWPPPEGAFVGFVLSRPEPMWAELKALAACRDGRVHRAADPLAGLKDLKEVRGLLAKDLAVLASREGLDLVPGDDPMLLAYLLDPSNTTPEGVARRYGGEWTEDAAHRALLSERLHRNLLKRLQGEEKLLWLYHEVEKPLSRVLAHMEATGVRLDVAYLQALSLELAEEIRRLEEEVFRLAGHPFNLNSRDQLERVLFDELRLPALGKTQKTGKRSTSAAVLEALREAHPIVEKILQHRELTKLKNTYVDPLPSLVHPNTGRLHTRFNQTATATGRLSSSDPNLQNIPVRTPLGQRIRRAFVAEAGWALVALDYSQIELRVLAHLSGDENLIRVFQEGKDIHTQTASWMFGVPPEAVDPLMRRAAKTVNFGVLYGMSAHRLSQELAIPYEEAVAFIERYFQSFPKVRAWIEKTLEEGRKRGYVETLFGRRRYVPDLNARVKSVREAAERMAFNMPVQGTAADLMKLAMVKLFPRLREMGARMLLQVHDELLLEAPQAGAEEVAALAKEAMEKAYPLAVPLEVEVGMGEDWLSAKG.

The region spanning Lys176–Gln262 is the 5'-3' exonuclease domain. Residues Glu412–Gly834 are polymerase.

Belongs to the DNA polymerase type-A family.

It carries out the reaction DNA(n) + a 2'-deoxyribonucleoside 5'-triphosphate = DNA(n+1) + diphosphate. Its function is as follows. Has 5'-3' exonuclease activity and no 3'-5' exonuclease activity. In Thermus caldophilus, this protein is DNA polymerase I, thermostable (polA).